Here is a 309-residue protein sequence, read N- to C-terminus: General transcription factor IIH subunit 3 (309 aa).

Residues 269–286 (CSVCLSIFCNFSPICTTC) form a C4-type zinc finger.

The protein belongs to the TFB4 family. Part of a TFIID-containing RNA polymerase II pre-initiation complex that is composed of TBP and at least GTF2A1, GTF2A2, GTF2E1, GTF2E2, GTF2F1, GTF2H2, GTF2H3, GTF2H4, GTF2H5, GTF2B, TCEA1, ERCC2, ERCC3, TAF1, TAF2, TAF3, TAF4, TAF5, TAF6, TAF7, TAF8, TAF9, TAF10, TAF11, TAF12 and TAF13. Component of the 7-subunit TFIIH core complex composed of XPB/ERCC3, XPD/ERCC2, GTF2H1, GTF2H2, GTF2H3, GTF2H4 and GTF2H5, which is active in NER. The core complex associates with the 3-subunit CDK-activating kinase (CAK) module composed of CCNH/cyclin H, CDK7 and MNAT1 to form the 10-subunit holoenzyme (holo-TFIIH) active in transcription. Interacts with RARA; the interaction requires prior phosphorylation of RARA on 'Ser-369' which then enhances interaction of RARA with CDK7.

It is found in the nucleus. Its function is as follows. Component of the general transcription and DNA repair factor IIH (TFIIH) core complex, which is involved in general and transcription-coupled nucleotide excision repair (NER) of damaged DNA and, when complexed to CAK, in RNA transcription by RNA polymerase II. In NER, TFIIH acts by opening DNA around the lesion to allow the excision of the damaged oligonucleotide and its replacement by a new DNA fragment. In transcription, TFIIH has an essential role in transcription initiation. When the pre-initiation complex (PIC) has been established, TFIIH is required for promoter opening and promoter escape. Phosphorylation of the C-terminal tail (CTD) of the largest subunit of RNA polymerase II by the kinase module CAK controls the initiation of transcription. The protein is General transcription factor IIH subunit 3 (Gtf2h3) of Rattus norvegicus (Rat).